Reading from the N-terminus, the 847-residue chain is MMIRSHRHWVFSSRIIIFLSLLVHSLASSSPHFCRDDQRDALLEFRGEFPINASWHIMNQWRGPWNKSTDCCLWNGVTCNDKSGQVISLDIPNTFLNNYLKTNSSLFKLQYLRHLDLTNCNLYGEIPSSLGNLSHLTLVNLYFNKFVGEIPASIGNLNQLRHLILANNVLTGEIPSSLGNLSRLVNLELFSNRLVGKIPDSIGDLKQLRNLSLASNNLIGEIPSSLGNLSNLVHLVLTHNQLVGEVPASIGNLIELRVMSFENNSLSGNIPISFANLTKLSIFVLSSNNFTSTFPFDMSIFHNLEYFDVSYNSFSGPFPKSLLLIPSLESIYLQENQFTGPIEFANTSSSTKLQDLILGRNRLHGPIPESISRLLNLEELDISHNNFTGAIPPTISKLVNLLHLDLSKNNLEGEVPACLWRLNTMVLSHNSFSSFENTSQEEALIEELDLNSNSFQGPIPYMICKLSSLGFLDLSNNLFSGSIPSCIRNFSGSIKELNLGDNNFSGTLPDIFSKATELVSLDVSHNQLEGKFPKSLINCKALELVNVESNKIKDIFPSWLESLPSLHVLNLRSNKFYGPLYHRHASIGFQSLRIIDISHNNFSGTLPPYYFSNWKDMTTLTEEMDQYMTEFWRYADSYYHEMEMVNKGVDMSFERIRRDFRAIDFSGNKINGNIPESLGYLKELRVLNLSGNAFTSVIPRFLANLTKLETLDISRNKLSGQIPQDLAALSFLSYMNFSHNLLQGPVPRGTQFQRQKCSSFLDNPGLYGLEDICRDTGALNPTSQLPEDLSEAEENMFNWVAAAIAYGPGVLCGLVIGHFYTSHNHEWFTEKFGRKQHKALTSVKCSL.

The first 27 residues, 1–27, serve as a signal peptide directing secretion; sequence MMIRSHRHWVFSSRIIIFLSLLVHSLA. The Extracellular segment spans residues 28-798; sequence SSSPHFCRDD…LSEAEENMFN (771 aa). N-linked (GlcNAc...) asparagine glycans are attached at residues N52, N66, N103, and N132. 25 LRR repeats span residues 109–133, 135–157, 158–181, 183–205, 206–229, 231–253, 254–277, 279–301, 302–325, 326–350, 351–374, 375–398, 400–422, 424–442, 443–466, 467–491, 492–514, 516–539, 541–562, 563–587, 589–613, 657–681, 682–704, 705–729, and 731–754; these read LQYLRHLDLTNCNLYGEIPSSLGNL, HLTLVNLYFNKFVGEIPASIGNL, NQLRHLILANNVLTGEIPSSLGNL, RLVNLELFSNRLVGKIPDSIGDL, KQLRNLSLASNNLIGEIPSSLGNL, NLVHLVLTHNQLVGEVPASIGNL, IELRVMSFENNSLSGNIPISFANL, KLSIFVLSSNNFTSTFPFDMSIF, HNLEYFDVSYNSFSGPFPKSLLLI, PSLESIYLQENQFTGPIEFANTSSS, TKLQDLILGRNRLHGPIPESISRL, LNLEELDISHNNFTGAIPPTISKL, NLLHLDLSKNNLEGEVPACLWRL, TMVLSHNSFSSFENTSQEE, ALIEELDLNSNSFQGPIPYMICKL, SSLGFLDLSNNLFSGSIPSCIRNFS, GSIKELNLGDNNFSGTLPDIFSK, TELVSLDVSHNQLEGKFPKSLINC, ALELVNVESNKIKDIFPSWLES, LPSLHVLNLRSNKFYGPLYHRHASI, FQSLRIIDISHNNFSGTLPPYYFSN, RRDFRAIDFSGNKINGNIPESLGYL, KELRVLNLSGNAFTSVIPRFLAN, LTKLETLDISRNKLSGQIPQDLAAL, and FLSYMNFSHNLLQGPVPRGTQFQR. N-linked (GlcNAc...) asparagine glycosylation occurs at N180. N-linked (GlcNAc...) asparagine glycosylation is found at N210 and N228. 3 N-linked (GlcNAc...) asparagine glycosylation sites follow: N263, N276, and N289. A glycan (N-linked (GlcNAc...) asparagine) is linked at N346. The N-linked (GlcNAc...) asparagine glycan is linked to N386. The N-linked (GlcNAc...) asparagine glycan is linked to N437. Residues N489 and N503 are each glycosylated (N-linked (GlcNAc...) asparagine). N601 is a glycosylation site (N-linked (GlcNAc...) asparagine). N-linked (GlcNAc...) asparagine glycans are attached at residues N688 and N704. Residue N736 is glycosylated (N-linked (GlcNAc...) asparagine). A helical transmembrane segment spans residues 799–819; it reads WVAAAIAYGPGVLCGLVIGHF. Residues 820 to 847 lie on the Cytoplasmic side of the membrane; it reads YTSHNHEWFTEKFGRKQHKALTSVKCSL.

Belongs to the RLP family.

The protein localises to the cell membrane. Involved in the perception of CLV3 and CLV3-like peptides, that act as extracellular signals regulating meristems maintenance. The polypeptide is Receptor-like protein 12 (Arabidopsis thaliana (Mouse-ear cress)).